The sequence spans 426 residues: Fc receptor-like B (426 aa).

An N-terminal signal peptide occupies residues 1 to 17 (MWPLTALLLLVPSSGQA). Ig-like C2-type domains are found at residues 23-101 (PILS…LSVS) and 103-189 (DWLI…VAVT). 2 cysteine pairs are disulfide-bonded: cysteine 44–cysteine 85 and cysteine 124–cysteine 168. An N-linked (GlcNAc...) asparagine glycan is attached at asparagine 152. The disordered stretch occupies residues 400–426 (ELRGTPETPTSHFAVSPGTPETTPVES). Residues 406–426 (ETPTSHFAVSPGTPETTPVES) are compositionally biased toward polar residues.

Expressed at low levels. Expressed in B-lymphocytes. Detected in tonsil, lung, kidney, spleen and placenta. Expressed by a small subset of germinal center B-cells in tonsils and by melanocytes (at protein level).

The protein resides in the cytoplasm. The protein localises to the endoplasmic reticulum. The sequence is that of Fc receptor-like B (FCRLB) from Homo sapiens (Human).